The following is a 158-amino-acid chain: RNA pyrophosphohydrolase (158 aa).

One can recognise a Nudix hydrolase domain in the interval 6 to 150 (GYRLNVGIVL…KRDVYRKVMQ (145 aa)). The Nudix box signature appears at 39-60 (GGINIGETPEQAMYRELFEEIG).

It belongs to the Nudix hydrolase family. RppH subfamily. A divalent metal cation serves as cofactor.

In terms of biological role, accelerates the degradation of transcripts by removing pyrophosphate from the 5'-end of triphosphorylated RNA, leading to a more labile monophosphorylated state that can stimulate subsequent ribonuclease cleavage. This Blochmanniella pennsylvanica (strain BPEN) protein is RNA pyrophosphohydrolase.